Reading from the N-terminus, the 581-residue chain is Rhodanese-like domain-containing protein 6 (581 aa).

The Rhodanese domain occupies 158-258 (ENKELVLLDA…YLEQFPSGGF (101 aa)). Cys-216 serves as the catalytic Cysteine persulfide intermediate.

The polypeptide is Rhodanese-like domain-containing protein 6 (STR6) (Arabidopsis thaliana (Mouse-ear cress)).